Consider the following 92-residue polypeptide: Small ribosomal subunit protein uS19 (92 aa).

This sequence belongs to the universal ribosomal protein uS19 family.

Protein S19 forms a complex with S13 that binds strongly to the 16S ribosomal RNA. The sequence is that of Small ribosomal subunit protein uS19 from Methylobacterium nodulans (strain LMG 21967 / CNCM I-2342 / ORS 2060).